The primary structure comprises 315 residues: Melanoma-associated antigen 9 (315 aa).

Over residues M1–D13 the composition is skewed to basic and acidic residues. Positions M1–S67 are disordered. Over residues S50–S67 the composition is skewed to low complexity. The region spanning L108–V307 is the MAGE domain.

In terms of tissue distribution, expressed in many tumors of several types, such as melanoma, head and neck squamous cell carcinoma, lung carcinoma and breast carcinoma, but not in normal tissues except for testes and placenta.

Functionally, not known, though may play a role in embryonal development and tumor transformation or aspects of tumor progression. The sequence is that of Melanoma-associated antigen 9 (MAGEA9) from Homo sapiens (Human).